Consider the following 778-residue polypeptide: Dynein axonemal intermediate chain 4 (778 aa).

WD repeat units lie at residues 477 to 517, 526 to 573, 586 to 629, 633 to 673, 676 to 715, and 721 to 760; these read HCES…QTPI, LHTS…ECVD, RHIS…QYLE, AHKR…PVMG, SGQR…LDPT, and SPGV…AGGG.

As to quaternary structure, part of the multisubunit axonemal dynein complex formed at least of two heavy chains and a number of intermediate and light chains.

The protein localises to the cytoplasm. Its subcellular location is the cytoskeleton. It is found in the flagellum axoneme. It localises to the cilium axoneme. The protein resides in the dynein axonemal particle. In terms of biological role, plays a critical role in the assembly of axonemal dynein complex. Plays a key role in ciliary motility. The chain is Dynein axonemal intermediate chain 4 from Danio rerio (Zebrafish).